Reading from the N-terminus, the 870-residue chain is Histidine biosynthesis trifunctional protein (870 aa).

Residues Met-1–Phe-285 form a phosphoribosyl-AMP cyclohydrolase region. The phosphoribosyl-ATP pyrophosphohydrolase stretch occupies residues Cys-286–Ala-367. Residues Ala-368 to Asn-870 are histidinol dehydrogenase. Zn(2+)-binding residues include Gln-693 and His-696. Residues Glu-762 and His-763 contribute to the active site. Residues Asp-796 and His-855 each coordinate Zn(2+).

This sequence in the C-terminal section; belongs to the histidinol dehydrogenase family. Requires Zn(2+) as cofactor.

The enzyme catalyses 1-(5-phospho-beta-D-ribosyl)-5'-AMP + H2O = 1-(5-phospho-beta-D-ribosyl)-5-[(5-phospho-beta-D-ribosylamino)methylideneamino]imidazole-4-carboxamide. It carries out the reaction 1-(5-phospho-beta-D-ribosyl)-ATP + H2O = 1-(5-phospho-beta-D-ribosyl)-5'-AMP + diphosphate + H(+). The catalysed reaction is L-histidinol + 2 NAD(+) + H2O = L-histidine + 2 NADH + 3 H(+). It participates in amino-acid biosynthesis; L-histidine biosynthesis; L-histidine from 5-phospho-alpha-D-ribose 1-diphosphate: step 2/9. The protein operates within amino-acid biosynthesis; L-histidine biosynthesis; L-histidine from 5-phospho-alpha-D-ribose 1-diphosphate: step 3/9. Its pathway is amino-acid biosynthesis; L-histidine biosynthesis; L-histidine from 5-phospho-alpha-D-ribose 1-diphosphate: step 9/9. This Neurospora crassa (strain ATCC 24698 / 74-OR23-1A / CBS 708.71 / DSM 1257 / FGSC 987) protein is Histidine biosynthesis trifunctional protein (his-3).